Reading from the N-terminus, the 241-residue chain is ATP synthase subunit a (241 aa).

Transmembrane regions (helical) follow at residues G30–G50, F91–W111, I128–S148, L193–L213, and G214–G234.

It belongs to the ATPase A chain family. As to quaternary structure, F-type ATPases have 2 components, CF(1) - the catalytic core - and CF(0) - the membrane proton channel. CF(1) has five subunits: alpha(3), beta(3), gamma(1), delta(1), epsilon(1). CF(0) has four main subunits: a, b, b' and c.

It localises to the cellular thylakoid membrane. Its function is as follows. Key component of the proton channel; it plays a direct role in the translocation of protons across the membrane. The protein is ATP synthase subunit a of Prochlorococcus marinus (strain AS9601).